The following is a 223-amino-acid chain: DNA mismatch repair protein MutH (223 aa).

It belongs to the MutH family.

It is found in the cytoplasm. Functionally, sequence-specific endonuclease that cleaves unmethylated GATC sequences. It is involved in DNA mismatch repair. The sequence is that of DNA mismatch repair protein MutH from Shewanella sp. (strain MR-4).